Consider the following 153-residue polypeptide: Transthyretin (153 aa).

Residues 1 to 24 (MAYYNTLALLTIFIFSGAFHRAQG) form the signal peptide. At Cys33 the chain carries Sulfocysteine. Residues Lys38, Glu77, and Ser140 each contribute to the L-thyroxine site.

It belongs to the transthyretin family. Homotetramer. Dimer of dimers. In the homotetramer, subunits assemble around a central channel that can accommodate two ligand molecules. Interacts with RBP4. In terms of processing, sulfonation of the reactive cysteine Cys-33 enhances the stability of the native conformation of TTR, avoiding misassembly of the protein leading to amyloid formation. Detected in plasma (at protein level). Expressed during metamorphosis in tadpole liver but not in tadpole brain, nor adult liver.

The protein resides in the secreted. In terms of biological role, thyroid hormone-binding protein, with a much higher binding affinity for triiodothyronine (T3) than for thyroxine (T4). Probably transports triiodothyronine from the bloodstream to the brain. The sequence is that of Transthyretin from Aquarana catesbeiana (American bullfrog).